The following is a 289-amino-acid chain: Glucanase inhibitor protein 2 (289 aa).

The N-terminal stretch at 1 to 19 (MKVTATIAAASMAIAAASA) is a signal peptide. The region spanning 29–257 (ILGGSIIPSG…ALKWVNPIIK (229 aa)) is the Peptidase S1 domain. Cys-56 and Cys-72 form a disulfide bridge. Residues Asn-89, Asn-104, and Asn-109 are each glycosylated (N-linked (GlcNAc...) asparagine). 2 disulfide bridges follow: Cys-180–Cys-192 and Cys-202–Cys-233.

This sequence belongs to the peptidase S1 family.

The protein resides in the secreted. Secreted effector that suppresses host plant glucan elicitor-mediated defense responses. Targets host endoglucanases and inhibits the endoglucanase-mediated release of elicitor-active glucan oligosaccharides from P.sojae cell walls. This Phytophthora sojae (Soybean stem and root rot agent) protein is Glucanase inhibitor protein 2.